The following is a 511-amino-acid chain: Exodeoxyribonuclease 7 large subunit (511 aa).

This sequence belongs to the XseA family. As to quaternary structure, heterooligomer composed of large and small subunits.

Its subcellular location is the cytoplasm. The catalysed reaction is Exonucleolytic cleavage in either 5'- to 3'- or 3'- to 5'-direction to yield nucleoside 5'-phosphates.. In terms of biological role, bidirectionally degrades single-stranded DNA into large acid-insoluble oligonucleotides, which are then degraded further into small acid-soluble oligonucleotides. This is Exodeoxyribonuclease 7 large subunit from Brucella melitensis biotype 2 (strain ATCC 23457).